The sequence spans 114 residues: Flagellar transcriptional regulator FlhD (114 aa).

This sequence belongs to the FlhD family. In terms of assembly, homodimer; disulfide-linked. Forms a heterohexamer composed of two FlhC and four FlhD subunits. Each FlhC binds a FlhD dimer, forming a heterotrimer, and a hexamer assembles by dimerization of two heterotrimers.

Its subcellular location is the cytoplasm. Functionally, functions in complex with FlhC as a master transcriptional regulator that regulates transcription of several flagellar and non-flagellar operons by binding to their promoter region. Activates expression of class 2 flagellar genes, including fliA, which is a flagellum-specific sigma factor that turns on the class 3 genes. Also regulates genes whose products function in a variety of physiological pathways. The protein is Flagellar transcriptional regulator FlhD of Wigglesworthia glossinidia brevipalpis.